The primary structure comprises 413 residues: Multifunctional CCA protein (413 aa).

Positions 8 and 11 each coordinate ATP. 2 residues coordinate CTP: Gly8 and Arg11. Residues Asp21 and Asp23 each coordinate Mg(2+). 3 residues coordinate ATP: Arg91, Arg143, and Arg146. CTP is bound by residues Arg91, Arg143, and Arg146. The 102-residue stretch at 232–333 (TGVHVMMVVD…VRLFERSDAL (102 aa)) folds into the HD domain.

The protein belongs to the tRNA nucleotidyltransferase/poly(A) polymerase family. Bacterial CCA-adding enzyme type 1 subfamily. Monomer. Can also form homodimers and oligomers. Requires Mg(2+) as cofactor. It depends on Ni(2+) as a cofactor.

The catalysed reaction is a tRNA precursor + 2 CTP + ATP = a tRNA with a 3' CCA end + 3 diphosphate. It carries out the reaction a tRNA with a 3' CCA end + 2 CTP + ATP = a tRNA with a 3' CCACCA end + 3 diphosphate. Its function is as follows. Catalyzes the addition and repair of the essential 3'-terminal CCA sequence in tRNAs without using a nucleic acid template. Adds these three nucleotides in the order of C, C, and A to the tRNA nucleotide-73, using CTP and ATP as substrates and producing inorganic pyrophosphate. tRNA 3'-terminal CCA addition is required both for tRNA processing and repair. Also involved in tRNA surveillance by mediating tandem CCA addition to generate a CCACCA at the 3' terminus of unstable tRNAs. While stable tRNAs receive only 3'-terminal CCA, unstable tRNAs are marked with CCACCA and rapidly degraded. The chain is Multifunctional CCA protein from Burkholderia cenocepacia (strain HI2424).